We begin with the raw amino-acid sequence, 127 residues long: Aspartate 1-decarboxylase (127 aa).

S25 functions as the Schiff-base intermediate with substrate; via pyruvic acid in the catalytic mechanism. Position 25 is a pyruvic acid (Ser) (S25). T57 provides a ligand contact to substrate. The active-site Proton donor is the Y58. 73 to 75 (GAA) contributes to the substrate binding site.

The protein belongs to the PanD family. In terms of assembly, heterooctamer of four alpha and four beta subunits. It depends on pyruvate as a cofactor. In terms of processing, is synthesized initially as an inactive proenzyme, which is activated by self-cleavage at a specific serine bond to produce a beta-subunit with a hydroxyl group at its C-terminus and an alpha-subunit with a pyruvoyl group at its N-terminus.

It localises to the cytoplasm. The catalysed reaction is L-aspartate + H(+) = beta-alanine + CO2. Its pathway is cofactor biosynthesis; (R)-pantothenate biosynthesis; beta-alanine from L-aspartate: step 1/1. Its function is as follows. Catalyzes the pyruvoyl-dependent decarboxylation of aspartate to produce beta-alanine. In Bacillus pumilus (strain SAFR-032), this protein is Aspartate 1-decarboxylase.